Reading from the N-terminus, the 101-residue chain is Floral defensin-like protein 2 (101 aa).

The N-terminal stretch at 1 to 25 (MARSICFFAVAILALMLFAAYETEA) is a signal peptide. 5 cysteine pairs are disulfide-bonded: C28/C74, C32/C48, C39/C61, C45/C68, and C49/C70. Positions 75–101 (ATEEATATLANEVKTMAEALVEEDMME) are cleaved as a propeptide — removed in mature form.

It belongs to the DEFL family. Post-translationally, when compared to other plant defensins, the petunia defensins have an additional fifth disulfide bond. As to expression, petals.

It localises to the secreted. The protein resides in the vacuole. Functionally, plant defense peptide with antifungal activity against F.oxysporum and B.cinerea. This is Floral defensin-like protein 2 (D2) from Petunia hybrida (Petunia).